A 278-amino-acid polypeptide reads, in one-letter code: Ubiquinone biosynthesis protein COQ4, mitochondrial (278 aa).

The transit peptide at 1 to 28 directs the protein to the mitochondrion; that stretch reads MATPTSVRIAGFRSLQALCAQRTVTRNF. Positions 164, 165, 168, and 180 each coordinate Zn(2+).

This sequence belongs to the COQ4 family. Component of a multi-subunit COQ enzyme complex, composed of at least COQ3, COQ4, COQ5, COQ6, COQ7 and COQ9. Requires Zn(2+) as cofactor.

The protein resides in the mitochondrion inner membrane. The catalysed reaction is a 4-hydroxy-3-methoxy-5-(all-trans-polyprenyl)benzoate + H(+) = a 2-methoxy-6-(all-trans-polyprenyl)phenol + CO2. It participates in cofactor biosynthesis; ubiquinone biosynthesis. Functionally, lyase that catalyzes the C1-decarboxylation of 4-hydroxy-3-methoxy-5-(all-trans-polyprenyl)benzoic acid into 2-methoxy-6-(all-trans-polyprenyl)phenol during ubiquinone biosynthesis. The protein is Ubiquinone biosynthesis protein COQ4, mitochondrial of Uncinocarpus reesii (strain UAMH 1704).